Here is a 676-residue protein sequence, read N- to C-terminus: DNA ligase (676 aa).

Residues 34-38 (DAEYD), 84-85 (SL), and glutamate 116 contribute to the NAD(+) site. Residue lysine 118 is the N6-AMP-lysine intermediate of the active site. NAD(+) is bound by residues arginine 139, glutamate 174, lysine 294, and lysine 318. Cysteine 412, cysteine 415, cysteine 428, and cysteine 433 together coordinate Zn(2+). Positions 589–676 (KGGEALKGLT…RTGKKAEELV (88 aa)) constitute a BRCT domain.

This sequence belongs to the NAD-dependent DNA ligase family. LigA subfamily. It depends on Mg(2+) as a cofactor. Mn(2+) serves as cofactor.

The catalysed reaction is NAD(+) + (deoxyribonucleotide)n-3'-hydroxyl + 5'-phospho-(deoxyribonucleotide)m = (deoxyribonucleotide)n+m + AMP + beta-nicotinamide D-nucleotide.. Functionally, DNA ligase that catalyzes the formation of phosphodiester linkages between 5'-phosphoryl and 3'-hydroxyl groups in double-stranded DNA using NAD as a coenzyme and as the energy source for the reaction. It is essential for DNA replication and repair of damaged DNA. This chain is DNA ligase, found in Thermus thermophilus (strain ATCC BAA-163 / DSM 7039 / HB27).